The following is a 418-amino-acid chain: Serine protease inhibitor A3K (418 aa).

A signal peptide spans M1–C21. N39, N105, N185, and N270 each carry an N-linked (GlcNAc...) asparagine glycan. Residues G369 to R394 are RCL.

It belongs to the serpin family. In terms of tissue distribution, expressed in liver and secreted in plasma.

Its subcellular location is the secreted. In terms of biological role, contrapsin inhibits trypsin-like proteases. The protein is Serine protease inhibitor A3K (Serpina3k) of Mus musculus (Mouse).